We begin with the raw amino-acid sequence, 1190 residues long: Laminin subunit gamma-2 (1190 aa).

Positions methionine 1–alanine 21 are cleaved as a signal peptide. Cystine bridges form between cysteine 28–cysteine 37, cysteine 30–cysteine 53, cysteine 56–cysteine 65, cysteine 68–cysteine 81, cysteine 84–cysteine 96, cysteine 86–cysteine 102, cysteine 104–cysteine 113, cysteine 116–cysteine 128, cysteine 139–cysteine 150, cysteine 141–cysteine 155, cysteine 157–cysteine 166, and cysteine 169–cysteine 184. Laminin EGF-like domains follow at residues cysteine 28–proline 83, cysteine 84–glutamine 130, and cysteine 139–glutamine 186. The Laminin EGF-like 4; first part domain maps to cysteine 187 to cysteine 196. The 169-residue stretch at glutamine 213–glutamine 381 folds into the Laminin IV type A domain. N-linked (GlcNAc...) asparagine glycosylation is found at asparagine 342 and asparagine 362. One can recognise a Laminin EGF-like 4; second part domain in the interval cysteine 382–proline 415. Laminin EGF-like domains follow at residues cysteine 416–proline 462, cysteine 463–proline 517, and cysteine 518–alanine 573. 11 cysteine pairs are disulfide-bonded: cysteine 463–cysteine 471, cysteine 465–cysteine 482, cysteine 485–cysteine 494, cysteine 497–cysteine 515, cysteine 518–cysteine 532, cysteine 520–cysteine 539, cysteine 542–cysteine 551, cysteine 554–cysteine 571, cysteine 574–cysteine 586, cysteine 576–cysteine 592, and cysteine 594–cysteine 603. Residues cysteine 574–cysteine 603 enclose the Laminin EGF-like 8; truncated domain. The interval glutamate 604–glutamine 1190 is domain II and I. A coiled-coil region spans residues alanine 613–aspartate 718. Residue serine 803 is glycosylated (O-linked (Xyl...) (chondroitin sulfate) serine). 2 coiled-coil regions span residues alanine 809–methionine 1073 and glutamate 1114–glutamine 1190. Residues asparagine 939 and asparagine 1030 are each glycosylated (N-linked (GlcNAc...) asparagine).

Laminin is a complex glycoprotein, consisting of three different polypeptide chains (alpha, beta, gamma), which are bound to each other by disulfide bonds into a cross-shaped molecule comprising one long and three short arms with globules at each end. Gamma-2 is a subunit of laminin-5 (laminin-332 or epiligrin/kalinin/nicein). In terms of processing, O-glycosylated; contains chondroitin sulfate (CS).

The protein resides in the secreted. Its subcellular location is the extracellular space. It is found in the extracellular matrix. The protein localises to the basement membrane. In terms of biological role, binding to cells via a high affinity receptor, laminin is thought to mediate the attachment, migration and organization of cells into tissues during embryonic development by interacting with other extracellular matrix components. Ladsin exerts cell-scattering activity toward a wide variety of cells, including epithelial, endothelial, and fibroblastic cells. The protein is Laminin subunit gamma-2 (LAMC2) of Equus caballus (Horse).